The following is a 151-amino-acid chain: Prefoldin subunit alpha (151 aa).

This sequence belongs to the prefoldin subunit alpha family. In terms of assembly, heterohexamer of two alpha and four beta subunits.

Its subcellular location is the cytoplasm. Functionally, molecular chaperone capable of stabilizing a range of proteins. Seems to fulfill an ATP-independent, HSP70-like function in archaeal de novo protein folding. The chain is Prefoldin subunit alpha from Sulfurisphaera tokodaii (strain DSM 16993 / JCM 10545 / NBRC 100140 / 7) (Sulfolobus tokodaii).